Reading from the N-terminus, the 350-residue chain is Protein-glutamate methylesterase/protein-glutamine glutaminase 1 (350 aa).

Residues 6–123 (RVLVVDDSAL…GRSVENYAEE (118 aa)) enclose the Response regulatory domain. Aspartate 57 carries the 4-aspartylphosphate modification. The 192-residue stretch at 159–350 (LGASGKIIFV…ARRVLGAVSA (192 aa)) folds into the CheB-type methylesterase domain. Residues serine 171, histidine 197, and aspartate 293 contribute to the active site.

This sequence belongs to the CheB family. Phosphorylated by CheA. Phosphorylation of the N-terminal regulatory domain activates the methylesterase activity.

Its subcellular location is the cytoplasm. The catalysed reaction is [protein]-L-glutamate 5-O-methyl ester + H2O = L-glutamyl-[protein] + methanol + H(+). The enzyme catalyses L-glutaminyl-[protein] + H2O = L-glutamyl-[protein] + NH4(+). Functionally, involved in chemotaxis. Part of a chemotaxis signal transduction system that modulates chemotaxis in response to various stimuli. Catalyzes the demethylation of specific methylglutamate residues introduced into the chemoreceptors (methyl-accepting chemotaxis proteins or MCP) by CheR. Also mediates the irreversible deamidation of specific glutamine residues to glutamic acid. In Dechloromonas aromatica (strain RCB), this protein is Protein-glutamate methylesterase/protein-glutamine glutaminase 1.